The sequence spans 479 residues: Adenosylhomocysteinase (479 aa).

Substrate is bound by residues Thr-56, Asp-133, and Glu-199. Residue 200–202 participates in NAD(+) binding; it reads TTT. 2 residues coordinate substrate: Lys-229 and Asp-233. Residues Asn-234, 263–268, Glu-286, Asn-321, 342–344, and Asn-390 contribute to the NAD(+) site; these read GYGDVG and IGH.

It belongs to the adenosylhomocysteinase family. As to quaternary structure, homotetramer. It depends on NAD(+) as a cofactor.

The catalysed reaction is S-adenosyl-L-homocysteine + H2O = L-homocysteine + adenosine. It functions in the pathway amino-acid biosynthesis; L-homocysteine biosynthesis; L-homocysteine from S-adenosyl-L-homocysteine: step 1/1. Functionally, adenosylhomocysteine is a competitive inhibitor of S-adenosyl-L-methionine-dependent methyl transferase reactions; therefore adenosylhomocysteinase may play a key role in the control of methylations via regulation of the intracellular concentration of adenosylhomocysteine. In Plasmodium yoelii yoelii, this protein is Adenosylhomocysteinase.